A 285-amino-acid polypeptide reads, in one-letter code: Short chain dehydrogenase sol3 (285 aa).

Positions 39, 64, and 87 each coordinate NADP(+). Residues Ser-168 and Tyr-200 each act as proton donor in the active site. NADP(+) contacts are provided by Tyr-200, Lys-204, and Ser-234. Lys-204 serves as the catalytic Lowers pKa of active site Tyr.

This sequence belongs to the short-chain dehydrogenases/reductases (SDR) family.

It functions in the pathway phytotoxin biosynthesis. Its function is as follows. Short chain dehydrogenase; part of the gene cluster that mediates the biosynthesis of the phytotoxin solanapyrone, a causal agent of early blight disease of potato and tomato. The prosolanapyrone synthase sol1 is a polyketide synthase that produces the octaketide desmethylprosolanapyrone I via sequential condensations of 7 malonyl-CoA units with one acetyl-CoA unit, and one methylation step. The octaketide backbone is further methylated by the sol2 O-methyltransferase to yield prosolanapyrone I. Prosolanapyrone I is hydroxylated to prosolanapyrone II by the cytochrome P450 monooxygenase sol6. The solanapyrone synthase sol5 then catalyzes the oxidation of prosolanapyrone II and the subsequent Diels Alder cycloisomerization of the product prosolanapyrone III to solanapyrones A and D. Solanapyrones A and D are then converted into solanapyrones B and E, respectively, by the sol3 dehydrogenase. The chain is Short chain dehydrogenase sol3 (sol3) from Alternaria solani.